A 344-amino-acid chain; its full sequence is Small ribosomal subunit protein bS1m (344 aa).

Phosphoserine is present on serine 327.

It belongs to the bacterial ribosomal protein bS1 family. Component of the mitochondrial small ribosomal subunit (mt-SSU). Mature yeast 74S mitochondrial ribosomes consist of a small (37S) and a large (54S) subunit. The 37S small subunit contains a 15S ribosomal RNA (15S mt-rRNA) and 34 different proteins. The 54S large subunit contains a 21S rRNA (21S mt-rRNA) and 46 different proteins.

It localises to the mitochondrion. In terms of biological role, component of the mitochondrial ribosome (mitoribosome), a dedicated translation machinery responsible for the synthesis of mitochondrial genome-encoded proteins, including at least some of the essential transmembrane subunits of the mitochondrial respiratory chain. The mitoribosomes are attached to the mitochondrial inner membrane and translation products are cotranslationally integrated into the membrane. bS1m functionally interacts with the 5'-UTR of mitochondrial mRNAs. This Saccharomyces cerevisiae (strain ATCC 204508 / S288c) (Baker's yeast) protein is Small ribosomal subunit protein bS1m (MRP51).